Here is a 473-residue protein sequence, read N- to C-terminus: Anthocyanidin-3-O-glucoside rhamnosyltransferase (473 aa).

Belongs to the UDP-glycosyltransferase family. Expressed in petals, styles and anthers.

It functions in the pathway pigment biosynthesis; anthocyanin biosynthesis. Its function is as follows. Controls the rhamnosylation of reddish anthocyanidin-3-O-glucosides, which is the first step in a series of modifications that finally yield magenta or blue/purple coloured anthocyanins. Controls the conversion of anthocyanidin-3-O-glucosides to anthocyanidin-3-O-rutinosides. The sequence is that of Anthocyanidin-3-O-glucoside rhamnosyltransferase from Petunia hybrida (Petunia).